A 306-amino-acid polypeptide reads, in one-letter code: Protodermal factor 1 (306 aa).

A signal peptide spans 1-23 (MRGMVSFAVWALFAALLSQQLFA). The segment covering 40–56 (PPSGSHGTPPSHTPPSS) has biased composition (low complexity). The interval 40–156 (PPSGSHGTPP…VVTPPSPIVD (117 aa)) is disordered. Residues 62 to 83 (PYDPSPSTPSHPSPPSHTPTPS) are compositionally biased toward pro residues. Low complexity predominate over residues 84-99 (TPSHTPTPHTPSHTPT). Residues 139 to 154 (SPPPRTPVVVTPPSPI) show a composition bias toward pro residues.

Confined to the shoot apical meristem (SAM) at the layer L1 in vegetative, infloresence and floral meristems, as well as in protoderm of organ primordia, including during embryogenesis. Also present in the tip of emerging lateral root primordia.

In terms of biological role, may be involved in the regulation of meristem growth. In Arabidopsis thaliana (Mouse-ear cress), this protein is Protodermal factor 1 (PDF1).